Reading from the N-terminus, the 201-residue chain is Natural cytotoxicity triggering receptor 3 (201 aa).

An N-terminal signal peptide occupies residues Met-1–Ala-18. The 108-residue stretch at Leu-19–Val-126 folds into the Ig-like domain. Residues Leu-19 to Gly-135 lie on the Extracellular side of the membrane. A disulfide bond links Cys-39 and Cys-108. N-linked (GlcNAc...) asparagine glycans are attached at residues Asn-42 and Asn-121. Residues Ala-136 to Val-156 traverse the membrane as a helical segment. Residues Gly-157 to Gly-201 lie on the Cytoplasmic side of the membrane.

It belongs to the natural cytotoxicity receptor (NCR) family. In terms of assembly, homodimer in the unliganted form. Interacts with CD3Z. Interacts with and is activated by binding to NCR3LG1. Interacts with and is activated by binding to BAG6. Interacts with and is inhibited by binding to LGALS3.

The protein resides in the cell membrane. In terms of biological role, cell membrane receptor of natural killer/NK cells that is activated by binding of extracellular ligands including BAG6 and NCR3LG1. Stimulates NK cells cytotoxicity toward neighboring cells producing these ligands. It controls, for instance, NK cells cytotoxicity against tumor cells. Engagement of NCR3 by BAG6 also promotes myeloid dendritic cells (DC) maturation, both through killing DCs that did not acquire a mature phenotype, and inducing the release by NK cells of TNFA and IFNG that promote DC maturation. The chain is Natural cytotoxicity triggering receptor 3 (NCR3) from Pan troglodytes (Chimpanzee).